We begin with the raw amino-acid sequence, 147 residues long: D-aminoacyl-tRNA deacylase (147 aa).

Positions G136–P137 match the Gly-cisPro motif, important for rejection of L-amino acids motif.

Belongs to the DTD family. In terms of assembly, homodimer.

The protein localises to the cytoplasm. It catalyses the reaction glycyl-tRNA(Ala) + H2O = tRNA(Ala) + glycine + H(+). It carries out the reaction a D-aminoacyl-tRNA + H2O = a tRNA + a D-alpha-amino acid + H(+). Functionally, an aminoacyl-tRNA editing enzyme that deacylates mischarged D-aminoacyl-tRNAs. Also deacylates mischarged glycyl-tRNA(Ala), protecting cells against glycine mischarging by AlaRS. Acts via tRNA-based rather than protein-based catalysis; rejects L-amino acids rather than detecting D-amino acids in the active site. By recycling D-aminoacyl-tRNA to D-amino acids and free tRNA molecules, this enzyme counteracts the toxicity associated with the formation of D-aminoacyl-tRNA entities in vivo and helps enforce protein L-homochirality. In Streptococcus equi subsp. equi (strain 4047), this protein is D-aminoacyl-tRNA deacylase.